We begin with the raw amino-acid sequence, 219 residues long: Elongation factor Ts (219 aa).

Residues 82-85 are involved in Mg(2+) ion dislocation from EF-Tu; it reads TDFV.

The protein belongs to the EF-Ts family.

It is found in the cytoplasm. Its function is as follows. Associates with the EF-Tu.GDP complex and induces the exchange of GDP to GTP. It remains bound to the aminoacyl-tRNA.EF-Tu.GTP complex up to the GTP hydrolysis stage on the ribosome. This is Elongation factor Ts from Synechococcus sp. (strain CC9902).